Consider the following 237-residue polypeptide: Ribosomal RNA small subunit methyltransferase G (237 aa).

S-adenosyl-L-methionine-binding positions include G78, F83, 129-130 (AE), and R148. Residues 216-237 (SKKKETPNKYPRKAGTPNKKPL) form a disordered region.

This sequence belongs to the methyltransferase superfamily. RNA methyltransferase RsmG family.

Its subcellular location is the cytoplasm. Its function is as follows. Specifically methylates the N7 position of a guanine in 16S rRNA. This is Ribosomal RNA small subunit methyltransferase G from Streptococcus agalactiae serotype V (strain ATCC BAA-611 / 2603 V/R).